The primary structure comprises 878 residues: Alanine--tRNA ligase (878 aa).

His564, His568, Cys665, and His669 together coordinate Zn(2+).

Belongs to the class-II aminoacyl-tRNA synthetase family. The cofactor is Zn(2+).

The protein resides in the cytoplasm. It catalyses the reaction tRNA(Ala) + L-alanine + ATP = L-alanyl-tRNA(Ala) + AMP + diphosphate. Catalyzes the attachment of alanine to tRNA(Ala) in a two-step reaction: alanine is first activated by ATP to form Ala-AMP and then transferred to the acceptor end of tRNA(Ala). Also edits incorrectly charged Ser-tRNA(Ala) and Gly-tRNA(Ala) via its editing domain. In Natranaerobius thermophilus (strain ATCC BAA-1301 / DSM 18059 / JW/NM-WN-LF), this protein is Alanine--tRNA ligase.